A 74-amino-acid chain; its full sequence is Pelophylaxin-2 (74 aa).

The N-terminal stretch at 1–22 is a signal peptide; that stretch reads MFTMKKSLLFFFFLGTIALSLC. Positions 23-42 are excised as a propeptide; that stretch reads EEERGADEEENGAEITDEEV. A disulfide bond links C68 and C74.

In terms of tissue distribution, expressed by the skin glands.

It is found in the secreted. Functionally, antimicrobial peptide. The chain is Pelophylaxin-2 from Pelophylax fukienensis (Fukien gold-striped pond frog).